The following is a 641-amino-acid chain: Protein TIC 62, chloroplastic (641 aa).

A chloroplast-targeting transit peptide spans 1 to 63 (MEGTCFLRGQ…LSLRASGPIR (63 aa)). Position 64 is an N-acetylalanine (alanine 64). 84 to 113 (VFVAGATGKVGSRTVRELLKLGFRVRAGVR) lines the NADP(+) pocket. A disordered region spans residues 328–641 (SKRPYVPPPK…SPLPSPVTNH (314 aa)). Basic and acidic residues predominate over residues 359–372 (APKEDEAPPKEKNV). Repeat copies occupy residues 376–397 (PLSP…PNST) and 444–465 (PLSP…PTAS). Positions 376–638 (PLSPYASYED…PPTSPLPSPV (263 aa)) are 4 X 22 AA approximate repeats. Residues 393–402 (IPNSTTSVSP) are compositionally biased toward low complexity. Residues 435-444 (KQVEEKKERP) show a composition bias toward basic and acidic residues. The segment covering 485 to 528 (SSTVAKTVTETAVATSVTETSVATSVPETAVATSVTETAAPATS) has biased composition (low complexity). Residues 532–553 (PLSPYAIYADLKPPTSPTPAST) form repeat 3. Polar residues predominate over residues 599–612 (AIDTSLASGDNTAQ). Repeat 4 spans residues 617 to 638 (PLSPYTMYADMKPPTSPLPSPV). A compositionally biased stretch (pro residues) spans 630-641 (PTSPLPSPVTNH).

As to quaternary structure, part of the Tic complex. Interacts with TIC110 and TIC55. Interacts with LFNR1 and LFNR2. Component of high molecular weight thylakoid LFNRs-containing protein complexes containing LIR1, LFNR1, LFNR2, TIC62 and TROL proteins. Expressed in cotyledons and leaves, but not in roots.

Its subcellular location is the plastid. The protein resides in the chloroplast inner membrane. It is found in the chloroplast stroma. It localises to the chloroplast thylakoid. Involved in protein precursor import into chloroplasts. Part of the redox regulon consisting of TIC32, TIC 55 and TIC62. Acts as a membrane anchor of LFNR1 and LFNR2. Has a NADPH-dependent dehydrogenase activity, but only after preincubation with lipids. The sequence is that of Protein TIC 62, chloroplastic from Arabidopsis thaliana (Mouse-ear cress).